A 354-amino-acid chain; its full sequence is DNA polymerase IV (354 aa).

In terms of domain architecture, UmuC spans 6–187 (IIHVDCDCFY…LPVARLHGVG (182 aa)). Residues Asp-10 and Asp-105 each coordinate Mg(2+). Glu-106 is an active-site residue.

It belongs to the DNA polymerase type-Y family. As to quaternary structure, monomer. Mg(2+) is required as a cofactor.

The protein resides in the cytoplasm. It catalyses the reaction DNA(n) + a 2'-deoxyribonucleoside 5'-triphosphate = DNA(n+1) + diphosphate. Functionally, poorly processive, error-prone DNA polymerase involved in untargeted mutagenesis. Copies undamaged DNA at stalled replication forks, which arise in vivo from mismatched or misaligned primer ends. These misaligned primers can be extended by PolIV. Exhibits no 3'-5' exonuclease (proofreading) activity. May be involved in translesional synthesis, in conjunction with the beta clamp from PolIII. This chain is DNA polymerase IV, found in Pseudomonas putida (strain ATCC 700007 / DSM 6899 / JCM 31910 / BCRC 17059 / LMG 24140 / F1).